Reading from the N-terminus, the 312-residue chain is Methionyl-tRNA formyltransferase (312 aa).

109–112 (SLLP) provides a ligand contact to (6S)-5,6,7,8-tetrahydrofolate.

It belongs to the Fmt family.

It catalyses the reaction L-methionyl-tRNA(fMet) + (6R)-10-formyltetrahydrofolate = N-formyl-L-methionyl-tRNA(fMet) + (6S)-5,6,7,8-tetrahydrofolate + H(+). In terms of biological role, attaches a formyl group to the free amino group of methionyl-tRNA(fMet). The formyl group appears to play a dual role in the initiator identity of N-formylmethionyl-tRNA by promoting its recognition by IF2 and preventing the misappropriation of this tRNA by the elongation apparatus. The sequence is that of Methionyl-tRNA formyltransferase from Anaeromyxobacter sp. (strain K).